A 189-amino-acid chain; its full sequence is Probable nicotinate-nucleotide adenylyltransferase (189 aa).

Belongs to the NadD family.

The catalysed reaction is nicotinate beta-D-ribonucleotide + ATP + H(+) = deamido-NAD(+) + diphosphate. It participates in cofactor biosynthesis; NAD(+) biosynthesis; deamido-NAD(+) from nicotinate D-ribonucleotide: step 1/1. Functionally, catalyzes the reversible adenylation of nicotinate mononucleotide (NaMN) to nicotinic acid adenine dinucleotide (NaAD). This chain is Probable nicotinate-nucleotide adenylyltransferase, found in Staphylococcus aureus (strain MRSA252).